A 246-amino-acid chain; its full sequence is Sugar fermentation stimulation protein homolog (246 aa).

Belongs to the SfsA family.

The chain is Sugar fermentation stimulation protein homolog from Prochlorococcus marinus (strain MIT 9312).